The sequence spans 498 residues: NAD(P)H-quinone oxidoreductase subunit 2, chloroplastic (498 aa).

Helical transmembrane passes span 18-38 (LTIL…VIDL), 51-71 (ISMV…GFFT), 87-107 (FFLL…ILCS), 111-131 (LAEF…LSCA), 134-154 (LVTI…LSGY), 168-188 (FLLM…LLYG), 211-231 (IIYL…SLFP), 244-264 (PTPV…ALFT), 278-298 (WHVA…LIAV), 306-326 (MLAF…LSAD), 337-357 (YTFI…LFGL), 379-399 (FSLV…GFFG), 411-431 (GLYS…YYYL), and 470-490 (IAMI…DPII).

Belongs to the complex I subunit 2 family. As to quaternary structure, NDH is composed of at least 16 different subunits, 5 of which are encoded in the nucleus.

It localises to the plastid. The protein localises to the chloroplast thylakoid membrane. It carries out the reaction a plastoquinone + NADH + (n+1) H(+)(in) = a plastoquinol + NAD(+) + n H(+)(out). The enzyme catalyses a plastoquinone + NADPH + (n+1) H(+)(in) = a plastoquinol + NADP(+) + n H(+)(out). In terms of biological role, NDH shuttles electrons from NAD(P)H:plastoquinone, via FMN and iron-sulfur (Fe-S) centers, to quinones in the photosynthetic chain and possibly in a chloroplast respiratory chain. The immediate electron acceptor for the enzyme in this species is believed to be plastoquinone. Couples the redox reaction to proton translocation, and thus conserves the redox energy in a proton gradient. In Adiantum capillus-veneris (Maidenhair fern), this protein is NAD(P)H-quinone oxidoreductase subunit 2, chloroplastic.